The chain runs to 201 residues: Ras-related protein Rab-1B (201 aa).

The residue at position 1 (methionine 1) is an N-acetylmethionine. GTP contacts are provided by serine 17, glycine 18, valine 19, glycine 20, lysine 21, serine 22, cysteine 23, tyrosine 33, threonine 34, glutamate 35, serine 36, serine 39, and threonine 40. Serine 22 contributes to the Mg(2+) binding site. Residues 30–45 (DDTYTESYISTIGVDF) carry the Switch 1 motif. Residues threonine 40 and aspartate 63 each contribute to the Mg(2+) site. The tract at residues 64–83 (TAGQERFRTITSSYYRGAHG) is switch 2 region; required for interaction with REP1/CHM. The Switch 2 signature appears at 65–80 (AGQERFRTITSSYYRG). Glycine 66 is a GTP binding site. Serine 76 carries the post-translational modification (Microbial infection) O-(2-cholinephosphoryl)serine. Tyrosine 77 bears the (Microbial infection) O-AMP-tyrosine mark. GTP-binding residues include asparagine 121, lysine 122, aspartate 124, serine 151, alanine 152, and lysine 153. The tract at residues 174–201 (GPGAASGGERPNLKIDSTPVKPAGGGCC) is disordered. 2 S-geranylgeranyl cysteine lipidation sites follow: cysteine 200 and cysteine 201. At cysteine 201 the chain carries Cysteine methyl ester.

It belongs to the small GTPase superfamily. Rab family. Interacts with MICAL1 and MICAL2. Interacts (in GTP-bound form) with MICALCL, MICAL1 and MILCAL3. Interacts with GDI1; the interaction requires the GDP-bound state. Interacts with CHM/REP1; the interaction requires the GDP-bound form and is necessary for prenylation by GGTase II. Interacts with RabGAP TBC1D20. Interacts (in GDP-bound form) with lipid phosphatase MTMR6 (via GRAM domain); the interaction regulates MTMR6 recruitment to the endoplasmic reticulum-Golgi intermediate compartment. Interacts (in GDP-bound form) with lipid phosphatase MTMR7. In terms of assembly, (Microbial infection) Interacts with L.pneumophila AnkX. Interacts with L.pneumophila Lem3. Interacts with L.pneumophila SidD. Interacts with L.pneumophila DrrA. It depends on Mg(2+) as a cofactor. Prenylated; by GGTase II, only after interaction of the substrate with Rab escort protein 1 (REP1). In terms of processing, (Microbial infection) AMPylation at Tyr-77 by L.pneumophila DrrA occurs in the switch 2 region and leads to moderate inactivation of the GTPase activity. It appears to prolong the lifetime of the GTP state of RAB1B by restricting access of GTPase effectors to switch 2 and blocking effector-stimulated GTP hydrolysis, thereby rendering RAB1B constitutively active. It is later de-AMPylated by L.pneumophila SidD, releasing RAB1B from bacterial phagosomes. Post-translationally, (Microbial infection) Phosphocholinated at Ser-76 by L.pneumophila AnkX, leading to displace GDP dissociation inhibitors (GDI). Both GDP-bound and GTP-bound forms can be phosphocholinated. Dephosphocholinated by L.pneumophila Lem3, restoring accessibility to L.pneumophila GTPase effector LepB. (Microbial infection) Glycosylated by S.typhimurium protein Ssek3: arginine GlcNAcylation prevents GTPase activity, thereby disrupting vesicular protein transport from the endoplasmic reticulum (ER) to the Golgi compartment.

The protein localises to the cytoplasm. It is found in the membrane. The protein resides in the preautophagosomal structure membrane. It localises to the perinuclear region. The catalysed reaction is GTP + H2O = GDP + phosphate + H(+). Its activity is regulated as follows. Regulated by guanine nucleotide exchange factors (GEFs) which promote the exchange of bound GDP for free GTP. Regulated by GTPase activating proteins (GAPs) including TBC1D20 which increases the GTP hydrolysis activity. Inhibited by GDP dissociation inhibitors (GDIs). Functionally, the small GTPases Rab are key regulators of intracellular membrane trafficking, from the formation of transport vesicles to their fusion with membranes. Rabs cycle between an inactive GDP-bound form and an active GTP-bound form that is able to recruit to membranes different set of downstream effectors directly responsible for vesicle formation, movement, tethering and fusion. Plays a role in the initial events of the autophagic vacuole development which take place at specialized regions of the endoplasmic reticulum. Regulates vesicular transport between the endoplasmic reticulum and successive Golgi compartments. Required to modulate the compacted morphology of the Golgi. Promotes the recruitment of lipid phosphatase MTMR6 to the endoplasmic reticulum-Golgi intermediate compartment. This is Ras-related protein Rab-1B from Homo sapiens (Human).